The sequence spans 127 residues: Holo-[acyl-carrier-protein] synthase (127 aa).

Mg(2+) contacts are provided by Asp7 and Glu56.

It belongs to the P-Pant transferase superfamily. AcpS family. Mg(2+) serves as cofactor.

Its subcellular location is the cytoplasm. It carries out the reaction apo-[ACP] + CoA = holo-[ACP] + adenosine 3',5'-bisphosphate + H(+). In terms of biological role, transfers the 4'-phosphopantetheine moiety from coenzyme A to a Ser of acyl-carrier-protein. This is Holo-[acyl-carrier-protein] synthase from Leptospira biflexa serovar Patoc (strain Patoc 1 / Ames).